Reading from the N-terminus, the 510-residue chain is UDP-N-acetylmuramoylalanine--D-glutamate ligase (510 aa).

An ATP-binding site is contributed by 138 to 144 (GTNGKTT). Positions 294–316 (FDEPAPAPRRKKDAPPPTRAGGR) are disordered.

The protein belongs to the MurCDEF family.

The protein localises to the cytoplasm. The catalysed reaction is UDP-N-acetyl-alpha-D-muramoyl-L-alanine + D-glutamate + ATP = UDP-N-acetyl-alpha-D-muramoyl-L-alanyl-D-glutamate + ADP + phosphate + H(+). Its pathway is cell wall biogenesis; peptidoglycan biosynthesis. Functionally, cell wall formation. Catalyzes the addition of glutamate to the nucleotide precursor UDP-N-acetylmuramoyl-L-alanine (UMA). The polypeptide is UDP-N-acetylmuramoylalanine--D-glutamate ligase (Bordetella pertussis (strain Tohama I / ATCC BAA-589 / NCTC 13251)).